Consider the following 212-residue polypeptide: Urease accessory protein UreG (212 aa).

Position 11-18 (11-18 (GPVGSGKT)) interacts with GTP.

The protein belongs to the SIMIBI class G3E GTPase family. UreG subfamily. In terms of assembly, homodimer. UreD, UreF and UreG form a complex that acts as a GTP-hydrolysis-dependent molecular chaperone, activating the urease apoprotein by helping to assemble the nickel containing metallocenter of UreC. The UreE protein probably delivers the nickel.

It is found in the cytoplasm. Facilitates the functional incorporation of the urease nickel metallocenter. This process requires GTP hydrolysis, probably effectuated by UreG. This is Urease accessory protein UreG from Trichodesmium erythraeum (strain IMS101).